The primary structure comprises 174 residues: uncharacterized protein (174 aa).

The segment at R153–G174 is disordered.

This is an uncharacterized protein from Sinorhizobium fredii (strain NBRC 101917 / NGR234).